Reading from the N-terminus, the 239-residue chain is Serine protease SplC (239 aa).

The first 36 residues, 1 to 36 (MNKNIVIKSMAALAILTSVTGINAAVVEETQQIANA), serve as a signal peptide directing secretion. Catalysis depends on charge relay system residues His-75, Asp-113, and Ser-193.

This sequence belongs to the peptidase S1B family.

The protein localises to the secreted. The polypeptide is Serine protease SplC (splC) (Staphylococcus aureus (strain USA300 / TCH1516)).